Consider the following 268-residue polypeptide: MAIPIRTEKEIVKLREACKLASDVLVMIEPYVKAGVTTGELDRICHEYMVNEQKVIPACLNYHGFPKATCISINEVVCHGIPSDDKVLKNGDIVNIDVTVIKDGYFGDNSKMYIVGGETNIRSKKLVEAAQEALYVGIRTVKPDIRLNEIGKAVQKYTESQTFSVVREYCGHGVGTEFHCEPQVLHYYADDGGVILKPGMVFTIEPMINAGKKEVRVMGDGWTVKTKDRSHSAQYEHQLIVTETGCEVMTIRDEEIAEGRISRIMVNV.

Residue histidine 79 participates in substrate binding. A divalent metal cation contacts are provided by aspartate 97, aspartate 108, and histidine 172. Histidine 179 is a binding site for substrate. A divalent metal cation-binding residues include glutamate 205 and glutamate 236.

The protein belongs to the peptidase M24A family. Methionine aminopeptidase type 1 subfamily. Monomer. The cofactor is Co(2+). Requires Zn(2+) as cofactor. Mn(2+) serves as cofactor. Fe(2+) is required as a cofactor.

The catalysed reaction is Release of N-terminal amino acids, preferentially methionine, from peptides and arylamides.. Functionally, removes the N-terminal methionine from nascent proteins. The N-terminal methionine is often cleaved when the second residue in the primary sequence is small and uncharged (Met-Ala-, Cys, Gly, Pro, Ser, Thr, or Val). Requires deformylation of the N(alpha)-formylated initiator methionine before it can be hydrolyzed. The protein is Methionine aminopeptidase of Haemophilus influenzae (strain ATCC 51907 / DSM 11121 / KW20 / Rd).